A 319-amino-acid polypeptide reads, in one-letter code: 3'-5' exoribonuclease YhaM (319 aa).

A DNA-binding region (OB) is located at residues 12 to 90 (EAVDGYLLIK…QLKIASIRPT (79 aa)). Residues 163–279 (HVVSMLRIGK…LHLIDNIDAK (117 aa)) enclose the HD domain.

Belongs to the YhaM family.

Shows a 3'-5' exoribonuclease activity. The protein is 3'-5' exoribonuclease YhaM of Shouchella clausii (strain KSM-K16) (Alkalihalobacillus clausii).